Reading from the N-terminus, the 437-residue chain is tRNA modification GTPase MnmE (437 aa).

3 residues coordinate (6S)-5-formyl-5,6,7,8-tetrahydrofolate: R21, E80, and R120. The region spanning 218-361 (GFVVVLAGPP…LLDRVAAAAG (144 aa)) is the TrmE-type G domain. N228 serves as a coordination point for K(+). GTP-binding positions include 228 to 233 (NAGKST), 247 to 253 (SPIPGTT), and 272 to 275 (DTAG). S232 contributes to the Mg(2+) binding site. K(+) is bound by residues S247, I249, and T252. Residue T253 coordinates Mg(2+). K437 is a binding site for (6S)-5-formyl-5,6,7,8-tetrahydrofolate.

Belongs to the TRAFAC class TrmE-Era-EngA-EngB-Septin-like GTPase superfamily. TrmE GTPase family. As to quaternary structure, homodimer. Heterotetramer of two MnmE and two MnmG subunits. The cofactor is K(+).

It is found in the cytoplasm. Functionally, exhibits a very high intrinsic GTPase hydrolysis rate. Involved in the addition of a carboxymethylaminomethyl (cmnm) group at the wobble position (U34) of certain tRNAs, forming tRNA-cmnm(5)s(2)U34. In Methylobacterium sp. (strain 4-46), this protein is tRNA modification GTPase MnmE.